The sequence spans 201 residues: Recombination protein RecR (201 aa).

The segment at 59-74 (CEICGNMDTENICCIC) adopts a C4-type zinc-finger fold. The region spanning 82-177 (SVIAVVETVA…KISRLASGIP (96 aa)) is the Toprim domain.

It belongs to the RecR family.

May play a role in DNA repair. It seems to be involved in an RecBC-independent recombinational process of DNA repair. It may act with RecF and RecO. This chain is Recombination protein RecR, found in Rickettsia felis (strain ATCC VR-1525 / URRWXCal2) (Rickettsia azadi).